A 31-amino-acid chain; its full sequence is LysM-domain containing protein (31 aa).

A LysM 1 repeat occupies 1–28 (YSPSLTDLQSYNAMNGPALKAGDILAVP).

This Jatropha curcas (Barbados nut) protein is LysM-domain containing protein.